The sequence spans 552 residues: Chaperonin GroEL (552 aa).

ATP contacts are provided by residues 30–33, Lys-51, 87–91, Gly-415, 479–481, and Asp-495; these read TLGP, DGTTT, and NAA.

It belongs to the chaperonin (HSP60) family. As to quaternary structure, forms a cylinder of 14 subunits composed of two heptameric rings stacked back-to-back. Interacts with the co-chaperonin GroES.

The protein localises to the cytoplasm. It carries out the reaction ATP + H2O + a folded polypeptide = ADP + phosphate + an unfolded polypeptide.. Functionally, together with its co-chaperonin GroES, plays an essential role in assisting protein folding. The GroEL-GroES system forms a nano-cage that allows encapsulation of the non-native substrate proteins and provides a physical environment optimized to promote and accelerate protein folding. This is Chaperonin GroEL from Nitrosospira multiformis (strain ATCC 25196 / NCIMB 11849 / C 71).